Consider the following 1104-residue polypeptide: Protein KIBRA (1104 aa).

2 consecutive WW domains span residues 6-39 (LPLP…DPRD) and 53-86 (DELP…DPRV). A coiled-coil region spans residues 107–193 (LSAQKEIYQV…ELQFKERGFQ (87 aa)). S141 carries the phosphoserine modification. 2 disordered regions span residues 429-449 (SMQS…RGSL) and 509-547 (TQKA…SPPC). Residues 527–542 (TPRSMTSLSPRSSLSS) are compositionally biased toward low complexity. S535 carries the post-translational modification Phosphoserine. S542 is modified (phosphoserine; by CDK1). Positions 659–782 (GATRVQIALK…RSGERSTRWY (124 aa)) constitute a C2 domain. Residues 822–949 (LEKRQEGRSS…DSSTLSKKPP (128 aa)) form a disordered region. The interaction with histone H3 stretch occupies residues 836-1104 (EGSWTYEEEA…NIPALSADDV (269 aa)). Positions 841–862 (YEEEASENEAVAEEEEEGEEDV) are enriched in acidic residues. Phosphoserine is present on residues S887, S891, and S919. Over residues 916 to 930 (IIRSKTFSPGPQSQY) the composition is skewed to polar residues. T921 carries the post-translational modification Phosphothreonine. Position 923 is a phosphoserine; by CDK1 (S923). Position 939 is a phosphoserine (S939). Interaction with PRKCZ regions lie at residues 945 to 988 (SKKP…LDLQ) and 948 to 967 (PPFV…RPSS). Phosphoserine; by PKC/PRKCZ is present on residues S967 and S970. The stretch at 994–1024 (HSQLTQEISVLKELKEHLEQAKNHGEKELPQ) forms a coiled coil. The ADDV motif motif lies at 1102–1104 (DDV).

This sequence belongs to the WWC family. KIBRA subfamily. As to quaternary structure, homodimer. Forms heterodimers with WWC2 and WWC3. Interacts with DDN. Interacts with DYNLL1 and histone H3. The interaction with DYNLL1 is mandatory for the recruitment and transactivation functions of ESR1 or DYNLL1 to the target chromatin and the interaction with histone H3 ensures proper regulatory interaction of WWC1-DYNLL1-ESR1 complexes with target chromatin. Interacts (via WW domains) with DDR1 (via PPxY motif) in a collagen-regulated manner. Interacts with PRKCZ (via the protein kinase domain). Forms a tripartite complex with DDR1 and PRKCZ, but predominantly in the absence of collagen. Interacts (via the ADDV motif) with PATJ (via PDZ domain 8). Interacts (via WW domains) with SYNPO (via PPxY motifs). Interacts with NF2 and SNX4. Interacts with CCDC141; retains AMPAR in the cytosol after internalization. Interacts with DLC1 and PRKCZ. Interacts (via WW domains) with LATS1 and LATS2. In terms of processing, phosphorylation at Ser-542 and Ser-923 by CDK1 in response to spindle damage stress regulates mitotic exit, these two sites are dephosphorylated by CDC14B. In terms of tissue distribution, mammary epithelium.

It localises to the cytoplasm. The protein resides in the perinuclear region. It is found in the nucleus. Its subcellular location is the cell projection. The protein localises to the ruffle membrane. It localises to the cytosol. Functionally, regulator of the Hippo signaling pathway, also known as the Salvador-Warts-Hippo (SWH) pathway. Enhances phosphorylation of LATS1 and YAP1 and negatively regulates cell proliferation and organ growth due to a suppression of the transcriptional activity of YAP1, the major effector of the Hippo pathway. Along with NF2 can synergistically induce the phosphorylation of LATS1 and LATS2 and function in the regulation of Hippo signaling pathway. Acts as a transcriptional coactivator of ESR1 which plays an essential role in DYNLL1-mediated ESR1 transactivation. Modulates directional migration of podocytes. May be associated with memory performance. Regulates collagen-stimulated activation of the ERK/MAPK cascade. Plays an important role in regulating AMPA-selective glutamate receptors (AMPARs) trafficking. The polypeptide is Protein KIBRA (Wwc1) (Mus musculus (Mouse)).